Reading from the N-terminus, the 199-residue chain is Imidazole glycerol phosphate synthase subunit HisH (199 aa).

The Glutamine amidotransferase type-1 domain occupies 2 to 199; sequence RAVIIDYGVG…LTNVYRWLRK (198 aa). The active-site Nucleophile is the Cys76. Active-site residues include His178 and Glu180.

In terms of assembly, heterodimer of HisH and HisF.

The protein localises to the cytoplasm. The enzyme catalyses 5-[(5-phospho-1-deoxy-D-ribulos-1-ylimino)methylamino]-1-(5-phospho-beta-D-ribosyl)imidazole-4-carboxamide + L-glutamine = D-erythro-1-(imidazol-4-yl)glycerol 3-phosphate + 5-amino-1-(5-phospho-beta-D-ribosyl)imidazole-4-carboxamide + L-glutamate + H(+). It catalyses the reaction L-glutamine + H2O = L-glutamate + NH4(+). Its pathway is amino-acid biosynthesis; L-histidine biosynthesis; L-histidine from 5-phospho-alpha-D-ribose 1-diphosphate: step 5/9. Functionally, IGPS catalyzes the conversion of PRFAR and glutamine to IGP, AICAR and glutamate. The HisH subunit catalyzes the hydrolysis of glutamine to glutamate and ammonia as part of the synthesis of IGP and AICAR. The resulting ammonia molecule is channeled to the active site of HisF. This is Imidazole glycerol phosphate synthase subunit HisH from Sulfolobus acidocaldarius (strain ATCC 33909 / DSM 639 / JCM 8929 / NBRC 15157 / NCIMB 11770).